The following is a 119-amino-acid chain: Dolichyl-diphosphooligosaccharide--protein glycosyltransferase subunit DAD1 (119 aa).

An N-acetylserine modification is found at serine 2. At 2-30 (SASVASVISRFLEEYLSSTPQRLKLLDAY) the chain is on the cytoplasmic side. The chain crosses the membrane as a helical span at residues 31–51 (LLYILLTGALQFGYCLLVGTF). Residues 52–54 (PFN) are Lumenal-facing. The helical transmembrane segment at 55–75 (SFLSGFISCVGSFILAGNGSL) threads the bilayer. The Cytoplasmic portion of the chain corresponds to 76-81 (RNRSNN). Residues 82 to 98 (VFTLVRCFSSLVTLFYS) traverse the membrane as a helical segment. The Lumenal segment spans residues 99 to 119 (RSPPREVPRGACIALFCERGN).

It belongs to the DAD/OST2 family. As to quaternary structure, component of the oligosaccharyltransferase (OST) complex. OST exists in two different complex forms which contain common core subunits RPN1, RPN2, OST48, OST4, DAD1 and TMEM258, either STT3A or STT3B as catalytic subunits, and form-specific accessory subunits. STT3A complex assembly occurs through the formation of 3 subcomplexes. Subcomplex 1 contains RPN1 and TMEM258, subcomplex 2 contains the STT3A-specific subunits STT3A, DC2/OSTC, and KCP2 as well as the core subunit OST4, and subcomplex 3 contains RPN2, DAD1, and OST48. The STT3A complex can form stable complexes with the Sec61 complex or with both the Sec61 and TRAP complexes.

Its subcellular location is the endoplasmic reticulum membrane. Its pathway is protein modification; protein glycosylation. Its function is as follows. Subunit of the oligosaccharyl transferase (OST) complex that catalyzes the initial transfer of a defined glycan (Glc(3)Man(9)GlcNAc(2) in eukaryotes) from the lipid carrier dolichol-pyrophosphate to an asparagine residue within an Asn-X-Ser/Thr consensus motif in nascent polypeptide chains, the first step in protein N-glycosylation. N-glycosylation occurs cotranslationally and the complex associates with the Sec61 complex at the channel-forming translocon complex that mediates protein translocation across the endoplasmic reticulum (ER). All subunits are required for a maximal enzyme activity. The chain is Dolichyl-diphosphooligosaccharide--protein glycosyltransferase subunit DAD1 from Canis lupus familiaris (Dog).